A 430-amino-acid chain; its full sequence is Histidine--tRNA ligase (430 aa).

Belongs to the class-II aminoacyl-tRNA synthetase family. In terms of assembly, homodimer.

It localises to the cytoplasm. It catalyses the reaction tRNA(His) + L-histidine + ATP = L-histidyl-tRNA(His) + AMP + diphosphate + H(+). The protein is Histidine--tRNA ligase of Chlorobaculum parvum (strain DSM 263 / NCIMB 8327) (Chlorobium vibrioforme subsp. thiosulfatophilum).